Reading from the N-terminus, the 327-residue chain is Flotillin-like protein FloA (327 aa).

A run of 2 helical transmembrane segments spans residues 6–26 (VLFF…FTFV) and 28–48 (IMLW…TLVG).

Belongs to the flotillin-like FloA family. In terms of assembly, homooligomerizes.

It localises to the cell membrane. It is found in the membrane raft. In terms of biological role, found in functional membrane microdomains (FMM) that may be equivalent to eukaryotic membrane rafts. FMMs are highly dynamic and increase in number as cells age. Flotillins are thought to be important factors in membrane fluidity. The polypeptide is Flotillin-like protein FloA (Priestia megaterium (strain DSM 319 / IMG 1521) (Bacillus megaterium)).